The sequence spans 1070 residues: DNA-directed RNA polymerase subunit beta (1070 aa).

Belongs to the RNA polymerase beta chain family. In terms of assembly, in plastids the minimal PEP RNA polymerase catalytic core is composed of four subunits: alpha, beta, beta', and beta''. When a (nuclear-encoded) sigma factor is associated with the core the holoenzyme is formed, which can initiate transcription.

It localises to the plastid. It is found in the chloroplast. The enzyme catalyses RNA(n) + a ribonucleoside 5'-triphosphate = RNA(n+1) + diphosphate. Its function is as follows. DNA-dependent RNA polymerase catalyzes the transcription of DNA into RNA using the four ribonucleoside triphosphates as substrates. The sequence is that of DNA-directed RNA polymerase subunit beta from Populus alba (White poplar).